Consider the following 318-residue polypeptide: Nuclear egress protein 1 (318 aa).

A CCCH-type zinc finger spans residues 129 to 239; it reads CLRLSPFGHS…HLLLQGTSLH (111 aa).

Belongs to the herpesviridae NEC1 protein family. In terms of assembly, forms a heterodimeric viral nuclear egress complex (NEC) with NEC2. Interacts with capsid vertex specific component 2/CVC2; this interaction directs the capsid to the host inner nuclear membrane to initiate budding. Phosphorylated at serine residues in the N-terminus. This phosphorylation regulates the localization within the inner nuclear membrane.

The protein resides in the host nucleus inner membrane. Its function is as follows. Plays an essential role in virion nuclear egress, the first step of virion release from infected cell. Within the host nucleus, NEC1 interacts with the newly formed capsid through the vertexes and directs it to the inner nuclear membrane by associating with NEC2. Induces the budding of the capsid at the inner nuclear membrane as well as its envelopment into the perinuclear space. There, the NEC1/NEC2 complex promotes the fusion of the enveloped capsid with the outer nuclear membrane and the subsequent release of the viral capsid into the cytoplasm where it will reach the secondary budding sites in the host Golgi or trans-Golgi network. The polypeptide is Nuclear egress protein 1 (Homo sapiens (Human)).